The chain runs to 371 residues: Cytochrome b (371 aa).

Transmembrane regions (helical) follow at residues 25-45 (FGSM…FLAV), 69-90 (WMMQ…YIHI), 105-125 (WMSG…GYVL), and 170-190 (FFAL…LHII). Residues histidine 75 and histidine 89 each contribute to the heme b site. Residues histidine 174 and histidine 188 each contribute to the heme b site. Position 193 (histidine 193) interacts with a ubiquinone. 4 consecutive transmembrane segments (helical) span residues 218-238 (HKDL…SSFF), 280-300 (LGGA…PFTH), 312-332 (LSQL…WAAT), and 339-358 (FIVI…LSTP).

It belongs to the cytochrome b family. As to quaternary structure, the cytochrome bc1 complex contains 3 respiratory subunits (MT-CYB, CYC1 and UQCRFS1), 2 core proteins (UQCRC1 and UQCRC2) and probably 6 low-molecular weight proteins. The cofactor is heme b.

Its subcellular location is the mitochondrion inner membrane. In terms of biological role, component of the ubiquinol-cytochrome c reductase complex (complex III or cytochrome b-c1 complex) that is part of the mitochondrial respiratory chain. The b-c1 complex mediates electron transfer from ubiquinol to cytochrome c. Contributes to the generation of a proton gradient across the mitochondrial membrane that is then used for ATP synthesis. The polypeptide is Cytochrome b (MT-CYB) (Aspidites melanocephalus (Black-headed python)).